The chain runs to 911 residues: Inter-alpha-trypsin inhibitor heavy chain H1 (911 aa).

The signal sequence occupies residues Met-1–Ala-27. Residues Leu-28–Arg-34 constitute a propeptide that is removed on maturation. One can recognise a VIT domain in the interval Ser-37–Glu-166. The S-linked (Hex...) cysteine glycan is linked to Cys-60. The residue at position 129 (Ser-129) is a Phosphoserine. The short motif at Val-181–Lys-184 is the Phagocytosis uptake signal element. 2 disulfides stabilise this stretch: Cys-244/Cys-247 and Cys-268/Cys-540. An N-linked (GlcNAc...) (complex) asparagine glycan is attached at Asn-285. In terms of domain architecture, VWFA spans Asn-290–Glu-450. The interval Ser-387–Phe-911 is hyaluronan-binding. Phosphothreonine is present on residues Thr-402 and Thr-407. The N-linked (GlcNAc...) (complex) asparagine glycan is linked to Asn-588. The O-linked (GalNAc...) threonine glycan is linked to Thr-653. Asp-672 carries the post-translational modification Aspartate 1-(chondroitin 4-sulfate)-ester. A propeptide spanning residues Pro-673–Phe-911 is cleaved from the precursor. Asn-750 carries an N-linked (GlcNAc...) asparagine glycan.

It belongs to the ITIH family. As to quaternary structure, I-alpha-I plasma protease inhibitors are assembled from one or two heavy chains (HC) and one light chain, bikunin. Inter-alpha-inhibitor (I-alpha-I) is composed of ITIH1/HC1, ITIH2/HC2 and bikunin. Interacts with TNFAIP6 (via Link and CUB domains). Post-translationally, heavy chains are linked to bikunin via chondroitin 4-sulfate esterified to the alpha-carboxyl of the C-terminal aspartate after propeptide cleavage. The S-linked glycan is composed of two 6-carbon sugars, possibly Glc or Gal.

Its subcellular location is the secreted. In terms of biological role, may act as a carrier of hyaluronan in serum or as a binding protein between hyaluronan and other matrix protein, including those on cell surfaces in tissues to regulate the localization, synthesis and degradation of hyaluronan which are essential to cells undergoing biological processes. Its function is as follows. Contains a potential peptide which could stimulate a broad spectrum of phagocytotic cells. The chain is Inter-alpha-trypsin inhibitor heavy chain H1 (ITIH1) from Homo sapiens (Human).